The primary structure comprises 501 residues: MAGSQQQQQQQAVSKPTGGKHGNNLPLWGNEKTMNLNPMILTNVLSSPYFKVQLYELKTYHEVVDEIYFKVNHVEPWEKGSRKTAGQTGMCGGVRGVGTGGIVSTAFCLLYKLFTLKLTRKQVMGLITHSDSPDIRALGFMYIRYTQPPPDLVDWYDEFLDDEEELDVKAGGGCVMTVGEMLRSFLTKLEWFSTLFPRIPVPVQKAIDQHMKSRPRKPPQKDEQEEEEEEATAAPAADTGRHGDKRRSRTPRRSPSPRKSQNRSRSRSHHRERHGASFDYELERERDRQRKEREGKDRDRDRDRDRERDRERDRDRRRSRTPDRNAERRRSRSRERRRSRSTSRDKRTERKDRDKDREAESERERSRKKDREHHKDRERSKDKRSKGEGEERRHKDDKEEKKHREEKRSKRSRSRSRDRKHKAERSSKKRSRSGSRSRQEAGEEKNRKRERSHSKDRQHKRSRSKERSHRRESSNERIHARQERPSSESGERTNSVRADSP.

Residues 1–11 show a composition bias toward low complexity; the sequence is MAGSQQQQQQQ. Disordered regions lie at residues 1–28 and 208–501; these read MAGS…LPLW and DQHM…ADSP. A compositionally biased stretch (basic residues) spans 243–273; it reads GDKRRSRTPRRSPSPRKSQNRSRSRSHHRER. A coiled-coil region spans residues 281–302; that stretch reads ELERERDRQRKEREGKDRDRDR. Residues 281–328 are compositionally biased toward basic and acidic residues; that stretch reads ELERERDRQRKEREGKDRDRDRDRDRERDRERDRDRRRSRTPDRNAER. The segment covering 329–341 has biased composition (basic residues); sequence RRSRSRERRRSRS. A compositionally biased stretch (basic and acidic residues) spans 342 to 408; the sequence is TSRDKRTERK…EEKKHREEKR (67 aa). Positions 409 to 435 are enriched in basic residues; the sequence is SKRSRSRSRDRKHKAERSSKKRSRSGS. Residues 437–447 show a composition bias toward basic and acidic residues; the sequence is SRQEAGEEKNR. Residues 448–468 are compositionally biased toward basic residues; that stretch reads KRERSHSKDRQHKRSRSKERS. Over residues 469-491 the composition is skewed to basic and acidic residues; sequence HRRESSNERIHARQERPSSESGE. A compositionally biased stretch (polar residues) spans 492-501; the sequence is RTNSVRADSP.

The protein belongs to the PRP38 family.

It localises to the nucleus. Its function is as follows. May be required for pre-mRNA splicing. This Danio rerio (Zebrafish) protein is Pre-mRNA-splicing factor 38B (prpf38b).